A 164-amino-acid chain; its full sequence is Phosphopantetheine adenylyltransferase (164 aa).

T10 provides a ligand contact to substrate. Residues 10-11 and H18 contribute to the ATP site; that span reads TF. Positions 42, 74, and 88 each coordinate substrate. Residues 89–91, E99, and 124–130 contribute to the ATP site; these read GIR and YAFVSST.

This sequence belongs to the bacterial CoaD family. In terms of assembly, homohexamer. It depends on Mg(2+) as a cofactor.

It localises to the cytoplasm. It catalyses the reaction (R)-4'-phosphopantetheine + ATP + H(+) = 3'-dephospho-CoA + diphosphate. It participates in cofactor biosynthesis; coenzyme A biosynthesis; CoA from (R)-pantothenate: step 4/5. Reversibly transfers an adenylyl group from ATP to 4'-phosphopantetheine, yielding dephospho-CoA (dPCoA) and pyrophosphate. The chain is Phosphopantetheine adenylyltransferase from Tolumonas auensis (strain DSM 9187 / NBRC 110442 / TA 4).